Reading from the N-terminus, the 406-residue chain is 2,3-bisphosphoglycerate-independent phosphoglycerate mutase (406 aa).

It belongs to the BPG-independent phosphoglycerate mutase family. A-PGAM subfamily.

It catalyses the reaction (2R)-2-phosphoglycerate = (2R)-3-phosphoglycerate. It participates in carbohydrate degradation; glycolysis; pyruvate from D-glyceraldehyde 3-phosphate: step 3/5. Functionally, catalyzes the interconversion of 2-phosphoglycerate and 3-phosphoglycerate. This Methanococcus maripaludis (strain C6 / ATCC BAA-1332) protein is 2,3-bisphosphoglycerate-independent phosphoglycerate mutase.